Here is a 327-residue protein sequence, read N- to C-terminus: tRNA N6-adenosine threonylcarbamoyltransferase (327 aa).

Residues H109 and H113 each contribute to the Fe cation site. Substrate is bound by residues 132 to 136 (MVSGG), D165, G178, D182, and N268. A Fe cation-binding site is contributed by D296.

Belongs to the KAE1 / TsaD family. The cofactor is Fe(2+).

It is found in the cytoplasm. The enzyme catalyses L-threonylcarbamoyladenylate + adenosine(37) in tRNA = N(6)-L-threonylcarbamoyladenosine(37) in tRNA + AMP + H(+). Required for the formation of a threonylcarbamoyl group on adenosine at position 37 (t(6)A37) in tRNAs that read codons beginning with adenine. Is involved in the transfer of the threonylcarbamoyl moiety of threonylcarbamoyl-AMP (TC-AMP) to the N6 group of A37, together with TsaE and TsaB. TsaD likely plays a direct catalytic role in this reaction. This Thermotoga petrophila (strain ATCC BAA-488 / DSM 13995 / JCM 10881 / RKU-1) protein is tRNA N6-adenosine threonylcarbamoyltransferase.